The primary structure comprises 385 residues: Alkanesulfonate monooxygenase (385 aa).

The protein belongs to the SsuD family.

It carries out the reaction an alkanesulfonate + FMNH2 + O2 = an aldehyde + FMN + sulfite + H2O + 2 H(+). Catalyzes the desulfonation of aliphatic sulfonates. This is Alkanesulfonate monooxygenase from Burkholderia pseudomallei (strain 1710b).